We begin with the raw amino-acid sequence, 143 residues long: Large ribosomal subunit protein uL15 (143 aa).

Composition is skewed to basic residues over residues 1–13 and 23–38; these read MIRKSKKITKQRG and KKHRGAGHRGGRGNAG. Residues 1–38 are disordered; that stretch reads MIRKSKKITKQRGSRTCGYGEAKKHRGAGHRGGRGNAG.

The protein belongs to the universal ribosomal protein uL15 family. In terms of assembly, part of the 50S ribosomal subunit.

Functionally, binds to the 23S rRNA. The protein is Large ribosomal subunit protein uL15 of Methanococcus vannielii.